Reading from the N-terminus, the 409-residue chain is MATRSLFHSLRCRLTNNGVLGSNFIRNAESSRFSKSYNADAAIGNSLVEESEEKDDLKSRIFRLRLPKRSATTVLEKWIGEGNQMTINELREISKELRRTRRYKHALEVTEWMVQHEESKISDADYASRIDLISKVFGIDAAERYFEGLDIDSKTAETYTSLLHAYAASKQTERAEALFKRIIESDSLTFGAITYNEMMTLYMSVGQVEKVPEVIEVLKQKKVSPDIFTYNLWLSSCAATFNIDELRKILEEMRHDASSNEGWVRYIDLTSIYINSSRVTNAESTLPVEAEKSISQREWITYDFLMILHTGLGNKVMIDQIWKSLRNTNQILSSRSYICVLSSYLMLGHLREAEEIIHQWKESKTTEFDASACLRILNAFRDVGLEGIASGFHLILVHNKCSLENEGSS.

Residues 1–38 constitute a mitochondrion transit peptide; it reads MATRSLFHSLRCRLTNNGVLGSNFIRNAESSRFSKSYN. PPR repeat units lie at residues 155–189, 191–225, 226–256, 262–296, 298–332, and 333–367; these read TAETYTSLLHAYAASKQTERAEALFKRIIESDSLT, GAITYNEMMTLYMSVGQVEKVPEVIEVLKQKKVSP, DIFTYNLWLSSCAATFNIDELRKILEEMRHD, GWVRYIDLTSIYINSSRVTNAESTLPVEAEKSISQ, EWITYDFLMILHTGLGNKVMIDQIWKSLRNTNQIL, and SSRSYICVLSSYLMLGHLREAEEIIHQWKESKTTE.

The protein belongs to the PPR family. P subfamily.

It is found in the mitochondrion. In Arabidopsis thaliana (Mouse-ear cress), this protein is Pentatricopeptide repeat-containing protein At5g09450, mitochondrial.